The following is a 312-amino-acid chain: Porphobilinogen deaminase (312 aa).

Cys-241 is modified (S-(dipyrrolylmethanemethyl)cysteine).

This sequence belongs to the HMBS family. In terms of assembly, monomer. The cofactor is dipyrromethane.

The enzyme catalyses 4 porphobilinogen + H2O = hydroxymethylbilane + 4 NH4(+). Its pathway is porphyrin-containing compound metabolism; protoporphyrin-IX biosynthesis; coproporphyrinogen-III from 5-aminolevulinate: step 2/4. It participates in porphyrin-containing compound metabolism; chlorophyll biosynthesis. Its function is as follows. Tetrapolymerization of the monopyrrole PBG into the hydroxymethylbilane pre-uroporphyrinogen in several discrete steps. The chain is Porphobilinogen deaminase from Chlorobaculum tepidum (strain ATCC 49652 / DSM 12025 / NBRC 103806 / TLS) (Chlorobium tepidum).